A 76-amino-acid chain; its full sequence is Kappa-scoloptoxin(15)-Ssd3a (76 aa).

The first 23 residues, 1–23, serve as a signal peptide directing secretion; the sequence is MEGKIIFICFLVVLLTLPELISS.

Contains 2 disulfide bonds. Expressed by the venom gland.

Its subcellular location is the secreted. Its function is as follows. Acts as a voltage-gated potassium channel inhibitor. The chain is Kappa-scoloptoxin(15)-Ssd3a from Scolopendra dehaani (Thai centipede).